Consider the following 156-residue polypeptide: uncharacterized protein (156 aa).

A compositionally biased stretch (polar residues) spans 1–12; that stretch reads MSSRFARSNGNP. Residues 1–27 form a disordered region; it reads MSSRFARSNGNPNHIRKRNHSPDPIGI. Residue Ser21 is modified to Phosphoserine.

The protein resides in the cytoplasm. The protein localises to the nucleus. This is an uncharacterized protein from Saccharomyces cerevisiae (strain ATCC 204508 / S288c) (Baker's yeast).